A 288-amino-acid polypeptide reads, in one-letter code: 4-diphosphocytidyl-2-C-methyl-D-erythritol kinase (288 aa).

The active site involves lysine 19. 102–112 serves as a coordination point for ATP; that stretch reads PMGGGIGGGSS. Aspartate 144 is a catalytic residue.

The protein belongs to the GHMP kinase family. IspE subfamily.

The catalysed reaction is 4-CDP-2-C-methyl-D-erythritol + ATP = 4-CDP-2-C-methyl-D-erythritol 2-phosphate + ADP + H(+). Its pathway is isoprenoid biosynthesis; isopentenyl diphosphate biosynthesis via DXP pathway; isopentenyl diphosphate from 1-deoxy-D-xylulose 5-phosphate: step 3/6. In terms of biological role, catalyzes the phosphorylation of the position 2 hydroxy group of 4-diphosphocytidyl-2C-methyl-D-erythritol. In Pseudomonas savastanoi pv. phaseolicola (strain 1448A / Race 6) (Pseudomonas syringae pv. phaseolicola (strain 1448A / Race 6)), this protein is 4-diphosphocytidyl-2-C-methyl-D-erythritol kinase.